Reading from the N-terminus, the 315-residue chain is Secreted frizzled-related protein 3 (315 aa).

The N-terminal stretch at 1–21 is a signal peptide; it reads MWRGLPALALAALLLLGRAPA. Residues 22–142 enclose the FZ domain; sequence GRAAACEPVR…LYDRGVCISP (121 aa). 5 cysteine pairs are disulfide-bonded: C27–C88, C35–C81, C72–C111, C100–C139, and C104–C128. A glycan (N-linked (GlcNAc...) asparagine) is linked at N41. The region spanning 170 to 290 is the NTR domain; sequence CKCKPIKATQ…WDQKLRHLGK (121 aa). A disordered region spans residues 284–315; that stretch reads KLRHLGKGKGEPGQSDSALKTGKPGNARQTRS.

It belongs to the secreted frizzled-related protein (sFRP) family.

Its subcellular location is the secreted. Soluble frizzled-related proteins (sFRPS) function as modulators of Wnt signaling through direct interaction with Wnts. They have a role in regulating cell growth and differentiation in specific cell types. SFRP3/FRZB appears to be involved in limb skeletogenesis. Antagonist of Wnt8 signaling. Regulates chondrocyte maturation and long bone development. The chain is Secreted frizzled-related protein 3 (FRZB) from Gallus gallus (Chicken).